We begin with the raw amino-acid sequence, 218 residues long: MGRVFLTGEKANSILKRYPRANGFFEEIRQGNIERECKEEFCTFEEAREAFENNEKTKEFWSTYTKAQQGESNRGSDWFQFYLTFPLIFGLFIILLVIFLIWRCFLRNKTRRQTVTEGHIPFPQHLNIITPPPPPDEVFDSSGLSPGFLGYVVGRSDSVSTRLSNCDPPPTYEEATGQVNLQRSETEPHLDPPPEYEDIVNSNSASAIPMVPVVTTIK.

A propeptide spanning residues 1 to 20 (MGRVFLTGEKANSILKRYPR) is cleaved from the precursor. The Gla domain maps to 21–66 (ANGFFEEIRQGNIERECKEEFCTFEEAREAFENNEKTKEFWSTYTK). The Extracellular portion of the chain corresponds to 21–83 (ANGFFEEIRQ…RGSDWFQFYL (63 aa)). Cysteines 37 and 42 form a disulfide. A helical transmembrane segment spans residues 84-106 (TFPLIFGLFIILLVIFLIWRCFL). Residues 107–218 (RNKTRRQTVT…PMVPVVTTIK (112 aa)) lie on the Cytoplasmic side of the membrane. The segment at 161–195 (TRLSNCDPPPTYEEATGQVNLQRSETEPHLDPPPE) is disordered.

In terms of processing, gla residues are produced after subsequent post-translational modifications of glutamate by a vitamin K-dependent gamma-carboxylase. In terms of tissue distribution, highly expressed in the spinal cord.

Its subcellular location is the membrane. This Homo sapiens (Human) protein is Transmembrane gamma-carboxyglutamic acid protein 1 (PRRG1).